The primary structure comprises 154 residues: MITVAFVCLGNICRSPMAEAIMRQKLLDRNINDIKVTSRGTGQWNLGEPPHEGTQAILSEHDIPFDGMISELFESNDDFDYIIAMDQSNVDNIKQINPNIKGQLFKLLEFSDMTETDVPDPYYTNNFEGVYKMVQSSCDNLINFIIKDANLREE.

Cysteine 8 acts as the Nucleophile in catalysis. Arginine 14 is a catalytic residue. Aspartate 120 acts as the Proton donor in catalysis.

Belongs to the low molecular weight phosphotyrosine protein phosphatase family.

It catalyses the reaction O-phospho-L-tyrosyl-[protein] + H2O = L-tyrosyl-[protein] + phosphate. Functionally, dephosphorylates the phosphotyrosine-containing proteins. This is Low molecular weight protein-tyrosine-phosphatase PtpA (ptpA) from Staphylococcus saprophyticus subsp. saprophyticus (strain ATCC 15305 / DSM 20229 / NCIMB 8711 / NCTC 7292 / S-41).